The sequence spans 49 residues: Large ribosomal subunit protein bL33C (49 aa).

Belongs to the bacterial ribosomal protein bL33 family.

The chain is Large ribosomal subunit protein bL33C from Lactococcus lactis subsp. cremoris (strain MG1363).